The following is a 46-amino-acid chain: Defensin-like protein 2 (46 aa).

Disulfide bonds link C3–C46, C13–C33, C19–C40, and C23–C42.

In terms of assembly, monomer. In terms of tissue distribution, present in seeds, cotyledons and leaves. Not found in roots or stems.

Has antibacterial activity against the Gram-positive bacterium S.aureus and the Gram-negative bacteria E.coli and P.syringae. Does not have antibacterial activity against the phytopathogenic bacteria R.solanacearum, Rhataybacter sp and Erwinia sp. Does not inhibit trypsin, chymotrypsin or alpha-amylases. This Vigna unguiculata (Cowpea) protein is Defensin-like protein 2.